Reading from the N-terminus, the 634-residue chain is Factor of DNA methylation 1 (634 aa).

The stretch at 288 to 469 (LDEKKNLHQA…LESMNSVLMT (182 aa)) forms a coiled coil. Basic and acidic residues predominate over residues 349–364 (ELDRQKLDEDKRKSDA). A disordered region spans residues 349–375 (ELDRQKLDEDKRKSDAMNKSLQLASRE).

As to quaternary structure, homodimer. Interacts with IDN2 and AGO4. Forms a complex with IDN2 and FMD2/INDL2. In terms of tissue distribution, highly expressed in flowers and at lower levels in roots, leaves and stems.

In terms of biological role, forms a complex with IDN2 and FDM2/IDNL2 that is required for RNA-directed DNA methylation (RdDM) and that functions at a downstream step of the RdDM pathway. Required for de novo DNA methylation and 24 nucleotide small interfering RNA (siRNA) accumulation. Binds unmethylated but not methylated DNAs through its coiled-coil domain. May bind double-stranded RNAs (dsRNAs) with 5'-overhangs through its XS domain. However, according to, FMD1 does not bind dsRNAs. This is Factor of DNA methylation 1 from Arabidopsis thaliana (Mouse-ear cress).